A 152-amino-acid polypeptide reads, in one-letter code: MAGLPRRIIKETQRLLAEPVPGIKAEPDESNARYFHVVIAGPQDSPFEGGTFKLELFLPEEYPMAAPKVRFMTKIYHPNVDKSGRICLDILKDKWSPALQIRTVLLSIQALLSAPNPDDPLANDVAEQWKTNEAQAIETARAWTRLYAMNNI.

Residues 3 to 149 (GLPRRIIKET…ARAWTRLYAM (147 aa)) enclose the UBC core domain. Lys82 is subject to N6-acetyllysine. Cys87 acts as the Glycyl thioester intermediate in catalysis. Residue Lys92 forms a Glycyl lysine isopeptide (Lys-Gly) (interchain with G-Cter in ISG15) linkage.

It belongs to the ubiquitin-conjugating enzyme family. Heterodimer with UBE2V2. Interacts (UBE2V2-UBE2N heterodimer) with the E3 ligase STUB1 (via the U-box domain); the complex has a specific 'Lys-63'-linked polyubiquitination activity. Interacts with RNF8 and RNF168. Interacts with RNF11. Interacts with the E3 ligases, HLTF and SHPRH; the interactions promote the 'Lys-63'-linked polyubiquitination of PCNA upon genotoxic stress and lead to DNA repair. Interacts with ARIH2 (via RING-type 2). Interacts with OTUB1; leading to inhibit E2-conjugating activity. Interacts with RIGI and RNF135; involved in RIGI ubiquitination and activation. Conjugation to ISG15 impairs formation of the thioester bond with ubiquitin but not interaction with UBE2V2.

It carries out the reaction S-ubiquitinyl-[E1 ubiquitin-activating enzyme]-L-cysteine + [E2 ubiquitin-conjugating enzyme]-L-cysteine = [E1 ubiquitin-activating enzyme]-L-cysteine + S-ubiquitinyl-[E2 ubiquitin-conjugating enzyme]-L-cysteine.. It functions in the pathway protein modification; protein ubiquitination. With respect to regulation, activity is inhibited by binding to OTUB1, which prevents 'Lys-63'-linked polyubiquitination. In terms of biological role, the UBE2V1-UBE2N and UBE2V2-UBE2N heterodimers catalyze the synthesis of non-canonical 'Lys-63'-linked polyubiquitin chains. This type of polyubiquitination does not lead to protein degradation by the proteasome. Mediates transcriptional activation of target genes. Plays a role in the control of progress through the cell cycle and differentiation. Plays a role in the error-free DNA repair pathway and contributes to the survival of cells after DNA damage. Acts together with the E3 ligases, HLTF and SHPRH, in the 'Lys-63'-linked poly-ubiquitination of PCNA upon genotoxic stress, which is required for DNA repair. Appears to act together with E3 ligase RNF5 in the 'Lys-63'-linked polyubiquitination of JKAMP thereby regulating JKAMP function by decreasing its association with components of the proteasome and ERAD. Promotes TRIM5 capsid-specific restriction activity and the UBE2V1-UBE2N heterodimer acts in concert with TRIM5 to generate 'Lys-63'-linked polyubiquitin chains which activate the MAP3K7/TAK1 complex which in turn results in the induction and expression of NF-kappa-B and MAPK-responsive inflammatory genes. Together with RNF135 and UB2V1, catalyzes the viral RNA-dependent 'Lys-63'-linked polyubiquitination of RIGI to activate the downstream signaling pathway that leads to interferon beta production. UBE2V1-UBE2N together with TRAF3IP2 E3 ubiquitin ligase mediate 'Lys-63'-linked polyubiquitination of TRAF6, a component of IL17A-mediated signaling pathway. In Macaca fascicularis (Crab-eating macaque), this protein is Ubiquitin-conjugating enzyme E2 N (UBE2N).